The primary structure comprises 349 residues: Isopentenyl-diphosphate delta-isomerase (349 aa).

6–7 (RK) provides a ligand contact to substrate. FMN is bound by residues 62–64 (AMT), S93, and N122. Q152 contributes to the substrate binding site. E153 contacts Mg(2+). FMN contacts are provided by residues K184, T214, 258 to 259 (GG), and 280 to 281 (AG).

This sequence belongs to the IPP isomerase type 2 family. Homooctamer. Dimer of tetramers. FMN serves as cofactor. The cofactor is NADPH. It depends on Mg(2+) as a cofactor.

It localises to the cytoplasm. It carries out the reaction isopentenyl diphosphate = dimethylallyl diphosphate. Its function is as follows. Involved in the biosynthesis of isoprenoids. Catalyzes the 1,3-allylic rearrangement of the homoallylic substrate isopentenyl (IPP) to its allylic isomer, dimethylallyl diphosphate (DMAPP). The chain is Isopentenyl-diphosphate delta-isomerase from Bacillus cereus (strain ZK / E33L).